A 216-amino-acid polypeptide reads, in one-letter code: TATA-box-binding protein-like 1 (216 aa).

2 consecutive repeat copies span residues 38–121 (KPVI…QRLG) and 126–210 (FNHF…ILLQ).

Belongs to the TBP family.

It localises to the nucleus. Functionally, TATA box-binding transcription factor. Members of the TBP family are differentially required to regulate transcription and development during early embryogenesis. The polypeptide is TATA-box-binding protein-like 1 (trf1) (Entamoeba histolytica (strain ATCC 30459 / HM-1:IMSS / ABRM)).